We begin with the raw amino-acid sequence, 996 residues long: MAESFFSDFGLLWYLEELKKEEFWKFKELLKQEPLKLKLKPIPWTELKKASRENVSKLLSKHYPGKLAWDVTLNLFLQISRDDLWRKARNEIRQKINPYRSHMKQKFQVLWEKEPCLLVPEDFYEETTKIEYELLSTVYLDAFKPGESSPTVVLHGPEGIGKTTFLRKVMLEWAKGNLWRDRFSFVFFLTGREMNGVTDMSLVELLSRDWPESSEPIEDIFSQPERILFILDGMEELKFDLDCNADLCEDWEQPQSMQVVLQSLLQKQMLPECSLLLALSKMGMRKNYSLLKHMKCIFLLGFSEHQRKLYFSHYFQEKDASSRAFSFVREKSSLFVLCQSPFLCWLVCTSLKCQLEKGEDLELDSETITGLYVSFFTKVFRSGSETCPLKQRRARLKSLCTLAAEGMWTCTFLFCPEDLRRNGVSESDTSMWLDMKLLHRSGDCLAFIHTCIQEFCAAMFYMFTRPKDPPHSVIGNVTQLITRAVSGHYSRLSWTAVFLFVFSTERMTHRLETSFGFPLSKEIKQEITQSLDTLSQCDPNNVMMSFQALFNCLFETQDPEFVAQVVNFFKDIDIYIGTKEELIICAACLRHCHSLQKFHLCMEHVFPDESGCISNTIEKLTLWRDVCSAFAASEDFEILNLDNCRFDEPSLAVLCRTLSQPVCKLRKFVCNFASNLANSLELFKVILHNPHLKHLNFYGSSLSHMDARQLCEALKHPMCNIEELMLGKCDITGEACEDIASVLVHNKKLNLLSLCENALKDDGVLVLCEALKNPDCALEALLLSHCCFSSAACDHLSQVLLYNRSLTFLDLGSNVLKDEGVTTLCESLKHPSCNLQELWLMNCYFTSVCCVDIATVLIHSEKLKTLKLGNNKIYDAGAKQLCKALKHPKCKLENLGLEACELSPASCEDLASALTTCKSLTCVNLEWITLDYDGAAVLCEALVSLECSLQLLGLNKSSYDEEIKMMLTQVEEMNPNLIISHHLWTDDEGRRRGILV.

Residues 1–94 (MAESFFSDFG…WRKARNEIRQ (94 aa)) form the Pyrin domain. In terms of domain architecture, NACHT spans 150 to 469 (PTVVLHGPEG…FYMFTRPKDP (320 aa)). 156-163 (GPEGIGKT) contributes to the ATP binding site. LRR repeat units follow at residues 748-769 (KLNL…VLCE), 777-798 (ALEA…HLSQ), 805-825 (SLTF…TTLC), 834-855 (NLQE…DIAT), 862-883 (KLKT…QLCK), and 891-914 (KLEN…ASAL).

It belongs to the NLRP family. As to quaternary structure, sensor component of NLRP9 inflammasomes. Inflammasomes are supramolecular complexes that assemble in the cytosol in response to pathogens, such as rotavirus, and play critical roles in innate immunity and inflammation. The core of NLRP9 inflammasomes consists of a signal sensor component (NLRP9), an adapter (ASC/PYCARD), which recruits an effector pro-inflammatory caspase (CASP1). Within the complex, NLRP9 and PYCARD interact via their respective DAPIN/pyrin domains. This interaction initiates speck formation (nucleation) which greatly enhances further addition of soluble PYCARD molecules to the speck in a prion-like polymerization process. Clustered PYCARD nucleates the formation of CASP1 filaments through the interaction of their respective CARD domains, acting as a platform for CASP1 polymerization. CASP1 filament formation increases local enzyme concentration, resulting in trans-autocleavage and activation. Active CASP1 then processes IL1B and IL18 precursors, leading to the release of mature cytokines in the extracellular milieu and inflammatory response. Interacts with DHX9 upon rotavirus infection; this interaction may trigger inflammasome activation and inflammatory response. Detected exclusively in testis and ovary, and at high level in the oocyte from antral follicles.

The protein resides in the cytoplasm. The protein localises to the inflammasome. Its function is as follows. As the sensor component of the NLRP9 inflammasome, plays a crucial role in innate immunity and inflammation. In response to pathogens, including rotavirus, initiates the formation of the inflammasome polymeric complex, made of NLRP9, PYCARD and CASP1. Recruitment of proCASP1 to the inflammasome promotes its activation and CASP1-catalyzed IL1B and IL18 maturation and release in the extracellular milieu. The active cytokines stimulate inflammatory responses. Inflammasomes can also induce pyroptosis, an inflammatory form of programmed cell death. NLRP9 inflammasome activation may be initiated by DHX9 interaction with viral double-stranded RNA (dsRNA), preferentially to short dsRNA segments. The polypeptide is NACHT, LRR and PYD domains-containing protein 9 (NLRP9) (Bos taurus (Bovine)).